Reading from the N-terminus, the 436-residue chain is Adenine nucleotide transporter BT1, chloroplastic/amyloplastic/mitochondrial (436 aa).

Residues 83–135 (ASLAPPFPGSRPPGRRGRGSEEEEAEGRRHEEAAAAGRSEPEEGQGQDRQPAP) form a disordered region. Solcar repeat units lie at residues 132-216 (QPAP…AKKF), 227-311 (IPIP…LKRL), and 324-412 (VGPV…CKKI). A run of 6 helical transmembrane segments spans residues 137 to 158 (RLVS…LETI), 193 to 213 (AVNV…YDTA), 229 to 247 (IPTP…TLCT), 290 to 310 (SLIG…TLKR), 327 to 347 (VATL…TFPL), and 384 to 405 (LYRG…AFMC). The span at 417–428 (EDEEEEDEAGGG) shows a compositional bias: acidic residues. The segment at 417 to 436 (EDEEEEDEAGGGEDDKKKVE) is disordered.

It belongs to the mitochondrial carrier (TC 2.A.29) family. In terms of tissue distribution, highly expressed in silks and endosperm of developing kernels. Expressed at intermediate levels in tassels and lower levels in stems and leaves.

The protein resides in the plastid. Its subcellular location is the chloroplast inner membrane. It is found in the amyloplast inner membrane. The protein localises to the mitochondrion inner membrane. Its activity is regulated as follows. Inhibited by mersalyl. Functionally, probable adenylate translocator that mediates transport of ADP-glucose into endosperm storage plastids during starch synthesis. Transports cytosolic ADP-glucose to amyloplast stroma by counter-exchange with ADP. This chain is Adenine nucleotide transporter BT1, chloroplastic/amyloplastic/mitochondrial (BT1), found in Zea mays (Maize).